The chain runs to 357 residues: MRVLGIETSCDETSAAVVSGTPEAMTLESCVILSQDVHRLFGGVVPEIASRQHLIGIVPAVAAALQEAQVSLSDIDAVAVTHAPGLVGALLVGTSFAKSLALSYDKPLVPVHHLEGHLFATLLEHPDAAPPFTALLVSGGHTLLLDVPAWGEYRLLGQTRDDAVGEAFDKVAKLLGLPYPGGRPIEQLAATAEAPVHKHPHRFARPMLRKSSTPADEDYYDCSFSGLKTAVLYAVRDAERTGTLDDARASIARGFQDAVIDTLVEKVVRAARQHRRSRVVLGGGVACNQALQAAMRNAMEQRKGHVFAPSPRLATDNAAMIAAAGIFRLQRGEFAAPDMTATASLPIPGMIVLSSAR.

Residues His113 and His117 each coordinate Fe cation. Residues 136–140 (LVSGG), Asp169, Gly182, and Asn288 each bind substrate. Asp316 contributes to the Fe cation binding site.

The protein belongs to the KAE1 / TsaD family. Fe(2+) serves as cofactor.

It is found in the cytoplasm. It carries out the reaction L-threonylcarbamoyladenylate + adenosine(37) in tRNA = N(6)-L-threonylcarbamoyladenosine(37) in tRNA + AMP + H(+). Required for the formation of a threonylcarbamoyl group on adenosine at position 37 (t(6)A37) in tRNAs that read codons beginning with adenine. Is involved in the transfer of the threonylcarbamoyl moiety of threonylcarbamoyl-AMP (TC-AMP) to the N6 group of A37, together with TsaE and TsaB. TsaD likely plays a direct catalytic role in this reaction. This chain is tRNA N6-adenosine threonylcarbamoyltransferase, found in Gemmatimonas aurantiaca (strain DSM 14586 / JCM 11422 / NBRC 100505 / T-27).